The primary structure comprises 264 residues: Proliferating cell nuclear antigen (264 aa).

The DNA-binding element occupies 61 to 80; that stretch reads RCDRNISMGMNLGNMAKMLK.

This sequence belongs to the PCNA family.

It localises to the nucleus. In terms of biological role, this protein is an auxiliary protein of DNA polymerase delta and is involved in the control of eukaryotic DNA replication by increasing the polymerase's processibility during elongation of the leading strand. This Daucus carota (Wild carrot) protein is Proliferating cell nuclear antigen.